A 352-amino-acid polypeptide reads, in one-letter code: uncharacterized protein (352 aa).

A disordered region spans residues 1–40 (MTSTMKLFTDHAEISVRERPPQRNNNNQEQDNSNRPAPRR). Residues 8–21 (FTDHAEISVRERPP) show a composition bias toward basic and acidic residues. The segment covering 22–36 (QRNNNNQEQDNSNRP) has biased composition (low complexity). The chain crosses the membrane as a helical span at residues 317-333 (MTITLPCGLTIAFFVYY).

It is found in the host cell membrane. This is an uncharacterized protein from Diadromus pulchellus idnoreovirus 1 (DpIRV-1).